Consider the following 190-residue polypeptide: Protein PLANT CADMIUM RESISTANCE 10 (190 aa).

2 helical membrane passes run 78-98 and 108-125; these read LLGS…WALV and GALL…ACGY.

It belongs to the cornifelin family.

It is found in the membrane. In terms of biological role, may be involved in cadmium resistance. This Arabidopsis thaliana (Mouse-ear cress) protein is Protein PLANT CADMIUM RESISTANCE 10 (PCR10).